The sequence spans 340 residues: Putative D-lactate dehydrogenase (340 aa).

NAD(+) is bound by residues Asn153–Ile154, Asp174, Thr206–Pro207, Val233–Arg235, and Asp259. Arg235 is a catalytic residue. The active site involves Glu264. Residue His296 is the Proton donor of the active site.

Belongs to the D-isomer specific 2-hydroxyacid dehydrogenase family.

The enzyme catalyses (R)-lactate + NAD(+) = pyruvate + NADH + H(+). The protein is Putative D-lactate dehydrogenase (ldhA) of Dictyostelium discoideum (Social amoeba).